A 348-amino-acid polypeptide reads, in one-letter code: Dihydroorotase (348 aa).

His-17 and His-19 together coordinate Zn(2+). Residues 19-21 (HLR) and Asn-45 contribute to the substrate site. Zn(2+) is bound by residues Lys-103, His-140, and His-178. The residue at position 103 (Lys-103) is an N6-carboxylysine. His-140 provides a ligand contact to substrate. Leu-223 lines the substrate pocket. Asp-251 is a Zn(2+) binding site. Asp-251 is an active-site residue. Substrate-binding residues include His-255 and Ala-267.

It belongs to the metallo-dependent hydrolases superfamily. DHOase family. Class II DHOase subfamily. Homodimer. Zn(2+) serves as cofactor.

The catalysed reaction is (S)-dihydroorotate + H2O = N-carbamoyl-L-aspartate + H(+). It participates in pyrimidine metabolism; UMP biosynthesis via de novo pathway; (S)-dihydroorotate from bicarbonate: step 3/3. Its function is as follows. Catalyzes the reversible cyclization of carbamoyl aspartate to dihydroorotate. The polypeptide is Dihydroorotase (Salmonella newport (strain SL254)).